A 209-amino-acid polypeptide reads, in one-letter code: Ribosomal RNA small subunit methyltransferase G (209 aa).

Positions 74, 79, and 139 each coordinate S-adenosyl-L-methionine.

This sequence belongs to the methyltransferase superfamily. RNA methyltransferase RsmG family.

Its subcellular location is the cytoplasm. The catalysed reaction is guanosine(527) in 16S rRNA + S-adenosyl-L-methionine = N(7)-methylguanosine(527) in 16S rRNA + S-adenosyl-L-homocysteine. Specifically methylates the N7 position of guanine in position 527 of 16S rRNA. The protein is Ribosomal RNA small subunit methyltransferase G of Halorhodospira halophila (strain DSM 244 / SL1) (Ectothiorhodospira halophila (strain DSM 244 / SL1)).